Consider the following 195-residue polypeptide: TM2 domain-containing protein C41D11.9 (195 aa).

Positions 1–20 (MLHKILFLICLASFIPTIGS) are cleaved as a signal peptide. The Extracellular portion of the chain corresponds to 21 to 136 (ISGTKDVKSK…NWSSGYSWTK (116 aa)). N-linked (GlcNAc...) asparagine glycosylation is found at N55, N93, and N127. The TM2 domain occupies 131–179 (GYSWTKTMILSVVLGGFGADRFYLGLWKSAIGKLFSFGGLGVWTLVDVV). The helical transmembrane segment at 137–157 (TMILSVVLGGFGADRFYLGLW) threads the bilayer. Over 158 to 163 (KSAIGK) the chain is Cytoplasmic. Residues 164–184 (LFSFGGLGVWTLVDVVLIAVG) form a helical membrane-spanning segment. Residues 185-195 (YIKPYDGSMYI) lie on the Extracellular side of the membrane.

Belongs to the TM2 family.

The protein localises to the membrane. This chain is TM2 domain-containing protein C41D11.9, found in Caenorhabditis elegans.